The chain runs to 230 residues: Homeobox protein Hox-B5 (230 aa).

Residues 1–135 (GGGGGNVSGS…GAAGTDGQSP (135 aa)) form a disordered region. Over residues 49 to 65 (FPGQESSRFRANQNCPL) the composition is skewed to polar residues. Over residues 87–103 (ATSSAHFTETEETSASS) the composition is skewed to low complexity. An Antp-type hexapeptide motif is present at residues 137–142 (IFPWMR). The homeobox DNA-binding region spans 155–214 (GKRARTAYTRYQTLELEKEFHFNRYLTRRRRIEIAHTLCLSERQIKIWFQNRRMKWKKDN).

Belongs to the Antp homeobox family.

The protein resides in the nucleus. Functionally, sequence-specific transcription factor which is part of a developmental regulatory system that provides cells with specific positional identities on the anterior-posterior axis. This chain is Homeobox protein Hox-B5 (hoxb5), found in Xenopus laevis (African clawed frog).